The primary structure comprises 396 residues: S-adenosylmethionine synthase 4 (396 aa).

Glu12 lines the Mg(2+) pocket. His18 is a binding site for ATP. Glu46 lines the K(+) pocket. Glu59 and Gln102 together coordinate L-methionine. ATP contacts are provided by residues 170–172 (DGK), 238–241 (SGRF), Asp249, 255–256 (RK), Ala272, Lys276, and Lys280. An L-methionine-binding site is contributed by Asp249. Lys280 contributes to the L-methionine binding site.

This sequence belongs to the AdoMet synthase family. Homotetramer. Requires Mn(2+) as cofactor. It depends on Mg(2+) as a cofactor. The cofactor is Co(2+). K(+) serves as cofactor.

It localises to the cytoplasm. It catalyses the reaction L-methionine + ATP + H2O = S-adenosyl-L-methionine + phosphate + diphosphate. The protein operates within amino-acid biosynthesis; S-adenosyl-L-methionine biosynthesis; S-adenosyl-L-methionine from L-methionine: step 1/1. Functionally, catalyzes the formation of S-adenosylmethionine from methionine and ATP. The reaction comprises two steps that are both catalyzed by the same enzyme: formation of S-adenosylmethionine (AdoMet) and triphosphate, and subsequent hydrolysis of the triphosphate. This Hordeum vulgare (Barley) protein is S-adenosylmethionine synthase 4 (SAM4).